Reading from the N-terminus, the 302-residue chain is Mas-related G-protein coupled receptor member A3 (302 aa).

The Extracellular segment spans residues 1–17 (MNETIPGSIDIETLIPD). A glycan (N-linked (GlcNAc...) asparagine) is linked at Asn-2. A helical membrane pass occupies residues 18-38 (LMIIIFGLVGLTGNAIVFWLL). Over 39 to 46 (GFRMHRTA) the chain is Cytoplasmic. The chain crosses the membrane as a helical span at residues 47–67 (FLVYILNLALADFLFLLCHII). Residue Asn-68 is glycosylated (N-linked (GlcNAc...) asparagine). Topologically, residues 68–81 (NSTVDLLKFTLPKG) are extracellular. A helical membrane pass occupies residues 82–102 (IFAFCFHTIKRVLYITGLSML). The Cytoplasmic segment spans residues 103–129 (SAISTERCLSVLCPIWYHCRRPEHTST). A helical transmembrane segment spans residues 130-150 (VMCAVIWVLSLLICILDGYFC). Topologically, residues 151 to 167 (GYLDNHYFNYSVCQAWD) are extracellular. Asn-159 carries N-linked (GlcNAc...) asparagine glycosylation. A helical membrane pass occupies residues 168–188 (IFIGAYLMFLFVVLCLSTLAL). Residues 189–211 (LARLFCGARNMKFTRLFVTIMLT) are Cytoplasmic-facing. The helical transmembrane segment at 212 to 232 (VLVFLLCGLPWGITWFLLFWI) threads the bilayer. Topologically, residues 233–242 (APGVFVLDYS) are extracellular. Residues 243–263 (PLLVLTAINSCANPIIYFFVG) form a helical membrane-spanning segment. At 264-302 (SFRQRLNKQTLKMVLQKALQDTPETPENMVEMSRNKAEP) the chain is on the cytoplasmic side.

Belongs to the G-protein coupled receptor 1 family. Mas subfamily. As to expression, expressed exclusively in dorsal root ganglia and nodose ganglia. Expressed in a subset of sensory neurons that includes nociceptors. Expressed in the subclass of non-peptidergic sensory neurons that are IB4(+) and VR1(-).

The protein resides in the cell membrane. Orphan receptor. May be a receptor for RFamide-family neuropeptides such as NPFF and NPAF, which are analgesic in vivo. May regulate nociceptor function and/or development, including the sensation or modulation of pain. Activated by the antimalarial drug chloroquine. Mediates chloroquine-induced itch, in a histamine-independent manner. This chain is Mas-related G-protein coupled receptor member A3 (Mrgpra3), found in Mus musculus (Mouse).